The sequence spans 419 residues: UDP-N-acetylglucosamine 1-carboxyvinyltransferase (419 aa).

Position 22-23 (22-23 (KN)) interacts with phosphoenolpyruvate. Arg-93 contributes to the UDP-N-acetyl-alpha-D-glucosamine binding site. The active-site Proton donor is the Cys-117. Cys-117 carries the 2-(S-cysteinyl)pyruvic acid O-phosphothioketal modification. Positions 307 and 329 each coordinate UDP-N-acetyl-alpha-D-glucosamine.

Belongs to the EPSP synthase family. MurA subfamily.

The protein localises to the cytoplasm. The catalysed reaction is phosphoenolpyruvate + UDP-N-acetyl-alpha-D-glucosamine = UDP-N-acetyl-3-O-(1-carboxyvinyl)-alpha-D-glucosamine + phosphate. Its pathway is cell wall biogenesis; peptidoglycan biosynthesis. Its function is as follows. Cell wall formation. Adds enolpyruvyl to UDP-N-acetylglucosamine. This Shewanella denitrificans (strain OS217 / ATCC BAA-1090 / DSM 15013) protein is UDP-N-acetylglucosamine 1-carboxyvinyltransferase.